A 1050-amino-acid polypeptide reads, in one-letter code: DNA-directed RNA polymerase subunit beta (1050 aa).

The protein belongs to the RNA polymerase beta chain family. In plastids the minimal PEP RNA polymerase catalytic core is composed of four subunits: alpha, beta, beta', and beta''. When a (nuclear-encoded) sigma factor is associated with the core the holoenzyme is formed, which can initiate transcription (Potential).

It is found in the plastid. Its subcellular location is the apicoplast. The catalysed reaction is RNA(n) + a ribonucleoside 5'-triphosphate = RNA(n+1) + diphosphate. Functionally, DNA-dependent RNA polymerase catalyzes the transcription of DNA into RNA using the four ribonucleoside triphosphates as substrates. The protein is DNA-directed RNA polymerase subunit beta (rpoB) of Neospora caninum (Coccidian parasite).